Here is a 198-residue protein sequence, read N- to C-terminus: Holliday junction resolvase RecU (198 aa).

A disordered region spans residues 1–21 (MVNYPHKLSSQKRQPSLSQPK). The segment covering 11–21 (QKRQPSLSQPK) has biased composition (polar residues). Mg(2+) is bound by residues threonine 81, aspartate 83, glutamate 96, and glutamine 115.

Belongs to the RecU family. The cofactor is Mg(2+).

Its subcellular location is the cytoplasm. It carries out the reaction Endonucleolytic cleavage at a junction such as a reciprocal single-stranded crossover between two homologous DNA duplexes (Holliday junction).. Its function is as follows. Endonuclease that resolves Holliday junction intermediates in genetic recombination. Cleaves mobile four-strand junctions by introducing symmetrical nicks in paired strands. Promotes annealing of linear ssDNA with homologous dsDNA. Required for DNA repair, homologous recombination and chromosome segregation. The chain is Holliday junction resolvase RecU from Streptococcus pneumoniae (strain ATCC 700669 / Spain 23F-1).